A 970-amino-acid polypeptide reads, in one-letter code: Anaphase-promoting complex subunit 3 (970 aa).

4 TPR repeats span residues 35–68 (EDNL…TMIK), 74–107 (ALSN…NNNN), 142–175 (NNNS…NSIS), and 185–218 (GSVY…YPFL). Positions 106 to 149 (NNNNNNNNNNNNNNNNNNNNNNNKDKCNNSNKNNDSNNNSNSNN) are disordered. Residues 274 to 300 (KVNNNNNNNNNNNNNINNNNSSNKNNE) are disordered. TPR repeat units lie at residues 319 to 353 (IKPN…TPIN) and 361 to 394 (TNQQ…TPQT). Disordered stretches follow at residues 358–379 (IQQT…PSQQ), 414–525 (PIPM…TTTT), and 556–582 (SSLS…HNKS). The segment covering 359 to 379 (QQTNQQQQQQQQQQPQQPSQQ) has biased composition (low complexity). Residues 424–443 (SKGSQHPPSSNSQTPYTPST) show a composition bias toward polar residues. Residues 446-460 (VHHHQKQQPHQHKKS) show a composition bias toward basic residues. The span at 500-525 (TSSTSKQQQQQQQTKQQTTTTTTTTT) shows a compositional bias: low complexity. TPR repeat units follow at residues 546 to 580 (TEEF…HHHN), 636 to 671 (LELF…QYRT), 672 to 705 (GWVL…EPYR), 740 to 773 (PYSW…DPDM), 775 to 807 (YAYT…DPRH), 808 to 841 (YNAF…NESS), 843 to 876 (VLCC…QPKN), 878 to 910 (FAKF…EPKE), and 911 to 944 (TPIY…DPKN). A compositionally biased stretch (basic residues) spans 570–580 (YQQHHHLHHHN).

This sequence belongs to the APC3/CDC27 family. As to quaternary structure, the APC/C is composed of at least 13 subunits that stay tightly associated throughout the cell cycle: anapc1, anapc2, anapc3, anapc4, anapc5, anapc6, anapc7, anapc8, anapc10, anapc11, cdc20, cdc26 and cdh1.

The protein localises to the nucleus. It participates in protein modification; protein ubiquitination. Component of the anaphase promoting complex/cyclosome (APC/C), a cell cycle-regulated E3 ubiquitin-protein ligase complex that controls progression through mitosis and the G1 phase of the cell cycle. This Dictyostelium discoideum (Social amoeba) protein is Anaphase-promoting complex subunit 3 (anapc3).